We begin with the raw amino-acid sequence, 956 residues long: MAM domain-containing glycosylphosphatidylinositol anchor protein 1 (956 aa).

An N-terminal signal peptide occupies residues 1-18 (MEVTCLLLLALIPFHCRG). 2 Ig-like domains span residues 24 to 123 (PAQA…KSIR) and 132 to 230 (PVLT…KSIT). N-linked (GlcNAc...) asparagine glycosylation is present at N42. Cystine bridges form between C60–C108 and C157–C214. N235, N257, and N307 each carry an N-linked (GlcNAc...) asparagine glycan. Ig-like domains are found at residues 240-323 (PTLK…KTVN), 338-432 (PDMI…VEVN), 440-534 (PTIS…VQLT), and 539-632 (PEVE…FQVS). 4 disulfide bridges follow: C262–C308, C357–C415, C463–C514, and C560–C616. One can recognise a Fibronectin type-III domain in the interval 644–744 (TPNPTRSHKL…SRVIHYTEPI (101 aa)). Positions 752-919 (NTCHFEDEKI…VTLKKGECPR (168 aa)) constitute an MAM domain. Polar residues predominate over residues 780–789 (LTQNPKRSPN). The disordered stretch occupies residues 780–799 (LTQNPKRSPNTGPPTDISGT). S933 carries the GPI-anchor amidated serine lipid modification. A propeptide spans 934 to 956 (GAPRLSSLQLWGSMTIFLLALQR) (removed in mature form).

As to quaternary structure, interacts heterophilically through its MAM domain with proteins in axon-rich regions and through its Ig-like domains with proteins in differentiating muscle. Interacts (through the Ig-like domains) with NLGN2. High levels detected in developing central and peripheral nervous systems with little expression elsewhere. In brain, highest levels in cerebral cortex and hindbrain at E15. At postnatal day 1, highest levels in basilar pons and superficial layers of the neocortex. In the developing spinal cord, restricted to a subpopulation of neurons in the dorsal and spinal ventral cord, probably D1 interneurons. Expressed in brain.

It localises to the cell membrane. Required for radial migration of cortical neurons in the superficial layer of the neocortex. Plays a role in the formation or maintenance of inhibitory synapses. May function by inhibiting the activity of NLGN2. The protein is MAM domain-containing glycosylphosphatidylinositol anchor protein 1 (Mdga1) of Rattus norvegicus (Rat).